The sequence spans 126 residues: MQATAQVQTPVVGRHVYGELYGVDESLLKDEERLRRIVIEAAHIANMHLVEVNSWKFKGGDKEGVSVIALVLESHIAIHTWPVYNFATVDVYTCGEHSDPMAAFRYIVSQLNPKRFTVNYSDRSYK.

Residue serine 74 is the Schiff-base intermediate with substrate; via pyruvic acid of the active site. Residue serine 74 is modified to Pyruvic acid (Ser); by autocatalysis. The active-site Proton acceptor; for processing activity is histidine 79. Catalysis depends on cysteine 94, which acts as the Proton donor; for catalytic activity.

Belongs to the prokaryotic AdoMetDC family. Type 1 subfamily. In terms of assembly, heterooctamer of four alpha and four beta chains arranged as a tetramer of alpha/beta heterodimers. Pyruvate serves as cofactor. In terms of processing, is synthesized initially as an inactive proenzyme. Formation of the active enzyme involves a self-maturation process in which the active site pyruvoyl group is generated from an internal serine residue via an autocatalytic post-translational modification. Two non-identical subunits are generated from the proenzyme in this reaction, and the pyruvate is formed at the N-terminus of the alpha chain, which is derived from the carboxyl end of the proenzyme. The post-translation cleavage follows an unusual pathway, termed non-hydrolytic serinolysis, in which the side chain hydroxyl group of the serine supplies its oxygen atom to form the C-terminus of the beta chain, while the remainder of the serine residue undergoes an oxidative deamination to produce ammonia and the pyruvoyl group blocking the N-terminus of the alpha chain.

The enzyme catalyses L-arginine + H(+) = agmatine + CO2. It functions in the pathway amine and polyamine biosynthesis; agmatine biosynthesis; agmatine from L-arginine: step 1/1. Its function is as follows. Specifically catalyzes the decarboxylation of L-arginine to agmatine. Has no S-adenosylmethionine decarboxylase (AdoMetDC) activity. This Pyrobaculum calidifontis (strain DSM 21063 / JCM 11548 / VA1) protein is Arginine decarboxylase proenzyme.